A 154-amino-acid chain; its full sequence is Transcriptional repressor NrdR (154 aa).

A zinc finger spans residues 3 to 34; the sequence is CPYCQSEDTQVKDSRPAEDGAAIRRRRACPVC. The ATP-cone domain occupies 49–139; that stretch reads LVVVKRTGRK…VYRNFREAKD (91 aa).

This sequence belongs to the NrdR family. Zn(2+) is required as a cofactor.

Functionally, negatively regulates transcription of bacterial ribonucleotide reductase nrd genes and operons by binding to NrdR-boxes. This Chelativorans sp. (strain BNC1) protein is Transcriptional repressor NrdR.